A 523-amino-acid chain; its full sequence is Polyamine aminopropyltransferase (523 aa).

7 consecutive transmembrane segments (helical) span residues 20 to 40, 51 to 71, 88 to 108, 116 to 136, 164 to 184, 186 to 206, and 215 to 235; these read VLLA…LALL, IVAT…GALL, AVLG…FAFL, LVLA…VPLL, LGAL…LGMI, GAAV…IFLL, and LVTA…LLVH. The tract at residues 203–478 is spermidine synthase; that stretch reads IFLLRHVVSG…APTPAVPSTA (276 aa). One can recognise a PABS domain in the interval 231-465; it reads TLLVHSHDIE…GDWGFALARL (235 aa). Gln261 lines the S-methyl-5'-thioadenosine pocket. Asp313 is a spermidine binding site. S-methyl-5'-thioadenosine contacts are provided by residues Glu333 and 365-366; that span reads DA. Asp386 (proton acceptor) is an active-site residue.

It belongs to the spermidine/spermine synthase family. Homodimer or homotetramer.

It is found in the cell membrane. It carries out the reaction S-adenosyl 3-(methylsulfanyl)propylamine + putrescine = S-methyl-5'-thioadenosine + spermidine + H(+). It participates in amine and polyamine biosynthesis; spermidine biosynthesis; spermidine from putrescine: step 1/1. Functionally, catalyzes the irreversible transfer of a propylamine group from the amino donor S-adenosylmethioninamine (decarboxy-AdoMet) to putrescine (1,4-diaminobutane) to yield spermidine. The polypeptide is Polyamine aminopropyltransferase (Mycobacterium bovis (strain ATCC BAA-935 / AF2122/97)).